The primary structure comprises 201 residues: Translation initiation factor IF-3 (201 aa).

This sequence belongs to the IF-3 family. In terms of assembly, monomer.

It localises to the cytoplasm. In terms of biological role, IF-3 binds to the 30S ribosomal subunit and shifts the equilibrium between 70S ribosomes and their 50S and 30S subunits in favor of the free subunits, thus enhancing the availability of 30S subunits on which protein synthesis initiation begins. The protein is Translation initiation factor IF-3 of Prochlorococcus marinus (strain SARG / CCMP1375 / SS120).